Consider the following 493-residue polypeptide: MKIYFKKNYLPSMDVDTAVVLQVEKYENSFGLEAVDPKGVAKKSFLRENFKGVFGTQVKLLYPEGSPVACLQVMGLGKQEEINDQTFLKTGGLCFPQLNKANKVVVFADALGIENQTSQVMHFALGLLLRSYSFKHYHTQKTKNEKNLEITFITENAELCQKEFDDVKAILGGVNLTKELVNEPANILGTNEFVERTQQLQTLGVEVEVLNKETLEKLGMNALLGVAQGSQRPPYLVVMKWLGGNENEKPVAFVGKGVVFDTGGISLKPSNKMEDMKGDMAGAATVVGLMHALAARKAKVNVLGVIGLVENMPGSNAQRPGDIVTSMSGQTIEVINTDAEGRLVLADALWYCKTKLQPKMIIDLATLTGAIVVALGYEYAGLFSNNKELVKQLVHSGEVTEEKVWQFPLGPEYDRLVDGKFADISNCPVGYGAGSITAAQFLKRFVGDDIPWAHIDIAGVASGKKKNEFNSSWASGFGVRLLNHLVKDYYENK.

The Mn(2+) site is built by lysine 256 and aspartate 261. Lysine 268 is a catalytic residue. Mn(2+) is bound by residues aspartate 279, aspartate 338, and glutamate 340. Arginine 342 is an active-site residue.

The protein belongs to the peptidase M17 family. Requires Mn(2+) as cofactor.

It localises to the cytoplasm. The catalysed reaction is Release of an N-terminal amino acid, Xaa-|-Yaa-, in which Xaa is preferably Leu, but may be other amino acids including Pro although not Arg or Lys, and Yaa may be Pro. Amino acid amides and methyl esters are also readily hydrolyzed, but rates on arylamides are exceedingly low.. The enzyme catalyses Release of an N-terminal amino acid, preferentially leucine, but not glutamic or aspartic acids.. In terms of biological role, presumably involved in the processing and regular turnover of intracellular proteins. Catalyzes the removal of unsubstituted N-terminal amino acids from various peptides. This chain is Probable cytosol aminopeptidase, found in Phytoplasma australiense.